Consider the following 101-residue polypeptide: MMLEHVLVLSSYLLSIGIYGLITSRNMVRALMCLELILNAVNINFVTFSDLFDNRQLKGDIFSIFVIGIAAAEAAIGLAIISAIHRNRKSTRINQSNLLNK.

Helical transmembrane passes span 2–22, 32–52, and 61–81; these read MLEH…YGLI, MCLE…SDLF, and IFSI…LAII.

It belongs to the complex I subunit 4L family. In terms of assembly, NDH is composed of at least 16 different subunits, 5 of which are encoded in the nucleus.

The protein resides in the plastid. It localises to the chloroplast thylakoid membrane. The enzyme catalyses a plastoquinone + NADH + (n+1) H(+)(in) = a plastoquinol + NAD(+) + n H(+)(out). It carries out the reaction a plastoquinone + NADPH + (n+1) H(+)(in) = a plastoquinol + NADP(+) + n H(+)(out). Its function is as follows. NDH shuttles electrons from NAD(P)H:plastoquinone, via FMN and iron-sulfur (Fe-S) centers, to quinones in the photosynthetic chain and possibly in a chloroplast respiratory chain. The immediate electron acceptor for the enzyme in this species is believed to be plastoquinone. Couples the redox reaction to proton translocation, and thus conserves the redox energy in a proton gradient. The protein is NAD(P)H-quinone oxidoreductase subunit 4L, chloroplastic of Ranunculus macranthus (Large buttercup).